The primary structure comprises 612 residues: Protein tipD (612 aa).

The disordered stretch occupies residues 95 to 128 (RNEKKTQQQPPSGSSKMDSSSSSSSSNRVSGMGS). Low complexity predominate over residues 106–128 (SGSSKMDSSSSSSSSNRVSGMGS). 7 WD repeats span residues 322 to 361 (GHNS…QKST), 364 to 403 (GASQ…SRHT), 406 to 444 (GHIG…CTRT), 447 to 486 (CFSS…PTQV), 490 to 530 (IHEG…TIRT), 535 to 576 (EYRN…TVKV), and 582 to 611 (NNGS…IIQW).

Belongs to the WD repeat tipD family.

In terms of biological role, not known; disruption of the gene for tipD results in morphological defects. The protein is Protein tipD (tipD) of Dictyostelium discoideum (Social amoeba).